The sequence spans 365 residues: Histidinol-phosphate aminotransferase (365 aa).

Lysine 220 carries the post-translational modification N6-(pyridoxal phosphate)lysine.

The protein belongs to the class-II pyridoxal-phosphate-dependent aminotransferase family. Histidinol-phosphate aminotransferase subfamily. Homodimer. It depends on pyridoxal 5'-phosphate as a cofactor.

The catalysed reaction is L-histidinol phosphate + 2-oxoglutarate = 3-(imidazol-4-yl)-2-oxopropyl phosphate + L-glutamate. Its pathway is amino-acid biosynthesis; L-histidine biosynthesis; L-histidine from 5-phospho-alpha-D-ribose 1-diphosphate: step 7/9. The sequence is that of Histidinol-phosphate aminotransferase (hisC) from Xylella fastidiosa (strain Temecula1 / ATCC 700964).